A 750-amino-acid polypeptide reads, in one-letter code: Phosphate transporter PHO1 homolog 7 (750 aa).

The SPX domain occupies 1 to 298; that stretch reads MKFGKDFVRQ…SRSAAKPYME (298 aa). Residues 1–350 lie on the Cytoplasmic side of the membrane; it reads MKFGKDFVRQ…KVKKEKHRIT (350 aa). The chain crosses the membrane as a helical span at residues 351-371; it reads FSTGFFVGCTVSLVVALVMFI. At 372–391 the chain is on the extracellular side; sequence HARNIMGAVGHKVYMETMFP. Residues 392–412 form a helical membrane-spanning segment; that stretch reads LYSLFAFVVLHMIMYASNIYF. Residues 413 to 435 lie on the Cytoplasmic side of the membrane; that stretch reads WKRYRVNYPFIFGFKEGTELGYR. Residues 436–456 traverse the membrane as a helical segment; that stretch reads HVLLLSFGLGTLALCAVLINL. The Extracellular portion of the chain corresponds to 457–472; sequence DMEMDPNTNDYKTMTE. The helical transmembrane segment at 473–493 threads the bilayer; it reads LLPMFILALVVAILFCPFNIF. The Cytoplasmic segment spans residues 494–622; it reads YRSSRVFFLM…YSFNRGNIWK (129 aa). In terms of domain architecture, EXS spans 557 to 750; sequence RSSDVYSTFY…NYNEEEDRDS (194 aa). The chain crosses the membrane as a helical span at residues 623 to 643; the sequence is ISAWVFSALATFYGTYWDIVF. Over 644-666 the chain is Extracellular; sequence DWGLLHRPSKHLLREKLLVPHKA. The chain crosses the membrane as a helical span at residues 667 to 687; sequence VYYVAIVLNIVLRMAWLQTVL. The Cytoplasmic segment spans residues 688–750; it reads DFNLSFLHRE…NYNEEEDRDS (63 aa).

Belongs to the SYG1 (TC 2.A.94) family. In terms of tissue distribution, expressed in root tips, vascular cylinders of roots and filaments, leaf hydathodes, stem, receptacle and stigma apex.

The protein localises to the cell membrane. In terms of biological role, may transport inorganic phosphate (Pi). In Arabidopsis thaliana (Mouse-ear cress), this protein is Phosphate transporter PHO1 homolog 7 (PHO1-H7).